The following is a 681-amino-acid chain: Potassium-transporting ATPase ATP-binding subunit (681 aa).

Helical transmembrane passes span 30–50, 59–79, 216–236, and 255–275; these read LLVY…FFGI, LAIA…EAIA, ILLV…LPFT, and IALL…SIGI. The 4-aspartylphosphate intermediate role is filled by aspartate 306. Residues aspartate 343, glutamate 347, 376–383, and lysine 394 each bind ATP; that span reads FTATTRMS. Mg(2+) contacts are provided by aspartate 517 and aspartate 521. Helical transmembrane passes span 587–607, 615–635, and 661–681; these read FAII…LNLM, AILS…PLSL, and LIAP…LGIV.

It belongs to the cation transport ATPase (P-type) (TC 3.A.3) family. Type IA subfamily. As to quaternary structure, the system is composed of three essential subunits: KdpA, KdpB and KdpC.

The protein localises to the cell membrane. The catalysed reaction is K(+)(out) + ATP + H2O = K(+)(in) + ADP + phosphate + H(+). Part of the high-affinity ATP-driven potassium transport (or Kdp) system, which catalyzes the hydrolysis of ATP coupled with the electrogenic transport of potassium into the cytoplasm. This subunit is responsible for energy coupling to the transport system and for the release of the potassium ions to the cytoplasm. The chain is Potassium-transporting ATPase ATP-binding subunit from Listeria monocytogenes serotype 4a (strain HCC23).